The sequence spans 1035 residues: Ephrin type-A receptor 6 (1035 aa).

The N-terminal stretch at 1–22 is a signal peptide; sequence MGGCEVREFLLQFGFFLPLLTA. The Extracellular segment spans residues 23–549; the sequence is WTGDCSHVSN…MAAEQGQILV (527 aa). The region spanning 33-211 is the Eph LBD domain; sequence QVVLLDTSTV…FYKKCPFTVR (179 aa). 2 Fibronectin type-III domains span residues 330-440 and 441-536; these read PPSA…TDQD and APSL…TGDE. N-linked (GlcNAc...) asparagine glycans are attached at residues Asn342, Asn396, and Asn409. The chain crosses the membrane as a helical span at residues 550 to 570; sequence IATAAVGGFTLLVILTLFFLI. At 571–1035 the chain is on the cytoplasmic side; that stretch reads TGRCQWYIKA…MHIQEKGFHV (465 aa). Phosphotyrosine; by autocatalysis is present on residues Tyr605 and Tyr611. Residues 630–943 form the Protein kinase domain; the sequence is IRIERVIGAG…RNPSALHTLV (314 aa). ATP is bound by residues 636–644 and Lys662; that span reads IGAGEFGEV. The active-site Proton acceptor is the Asp797. 2 positions are modified to phosphotyrosine; by autocatalysis: Tyr830 and Tyr977. The 65-residue stretch at 960 to 1024 folds into the SAM domain; it reads PLFVTVGDWL…VSSIQTLRLH (65 aa). Positions 1033–1035 match the PDZ-binding motif; the sequence is FHV.

The protein belongs to the protein kinase superfamily. Tyr protein kinase family. Ephrin receptor subfamily. Heterotetramer upon binding of the ligand. The heterotetramer is composed of an ephrin dimer and a receptor dimer. Oligomerization is probably required to induce biological responses. Interacts (via SAM domain) with ANKS1A (via SAM domain). Brain.

The protein resides in the membrane. The catalysed reaction is L-tyrosyl-[protein] + ATP = O-phospho-L-tyrosyl-[protein] + ADP + H(+). Functionally, receptor tyrosine kinase which binds promiscuously GPI-anchored ephrin-A family ligands residing on adjacent cells, leading to contact-dependent bidirectional signaling into neighboring cells. The signaling pathway downstream of the receptor is referred to as forward signaling while the signaling pathway downstream of the ephrin ligand is referred to as reverse signaling. The sequence is that of Ephrin type-A receptor 6 (Epha6) from Rattus norvegicus (Rat).